A 1473-amino-acid chain; its full sequence is MHCFLGREILSFFCLTVRKMWLKFILAILLLHAAAGKEPEPQYVLMVPAVLQSDSPSQVCLQFFNLNQTISVRVVLEYDTINTTIFEKNTTTSNGLQCLNFMIPPVTSVSLAFISFTAKGTTFDLKERRSVMIWNMESFVFVQTDKPIYKPGQSVMFRVVALDFNFKPVQEMYPLIAVQDPQNNRIFQWQNVTSEINIVQIEFPLTEEPILGNYKIIVTKKSGERTSHSFLVEEYVLPKFDVTVTAPGSLTVMDSELTVKICAVYTYGQPVEGKVQLSVCRDFDSYGRCKKSPVCQSFTKDLDTDGCLSHILSSKVFELNRIGYKRNLDVKAIVTEKEQVCNLTATQSISITQVMSSLQFENVDHHYRRGIPYFGQIKLVDKDNSPISNKVIQLFVNNKNTHNFTTDINGIAPFSIDTSKIFDPELSLKALYKTSDQCHSEGWIEPSYPDASLSVQRLYSWTSSFVRIEPLWKDMSCGQKRMITVYYILNTEGYEHINIVNFYYVGMAKGKIVLTGEIKVNIQADQNGTFMIPLVVNEKMAPALRLLVYMLHPAKELVADSVRFSIEKCFKNKVQLQFSEKQMLTTSNVSLVIEAAANSFCAVRAVDKSMLLLKSETELSAETIYNLHPIQDLQGYIFNGLNLEDDPQDPCVSSDDIFHKGLYYRPLTSGLGPDVYQFLRDMGMKFFTNSKIRQPTVCTRETVRPPSYFLNAGFTASTHHVKLSAEVAREERGKRHILETIREFFPETWIWDIILINSTGKASVSYTIPDTITEWKASAFCVEELAGFGMSVPATLTAFQPFFVDLTLPYSIIHGEDFLVRANVFNYLNHCIKINVLLLESLDYQAKLISPEDDGCVCAKIRKSYVWNIFPKGTGDVLFSITAETNDDEACEEEALRNIRIDYRDTQIRALLVEPEGIRREETQNFLICMKDDVISQDVAIDLPTNVVEGSPRPSFSVVGDIMGTAIQNVHQLLQMPFGNGEQNMVLFAPNIYVLDYLDKTRQLSEDVKSKTIGYLVSGYQKQLSYKHPDGSYSTFGIRDKEGNTWLTAFVYKSFAEASRFIYIDDNVQAQTLIWLATKQKTDGCFQSTGILVNNAMKGGVENELSLSAYITIALLEAGHSMSHTVIRNAFYCLETASEKNITDIYTQALVAYAFCLAGKAEICESFLRELQKSAKEVDGSKYWEQNQRSAPEKSHLLDHVQSTDVEITSYVLLALLYKPNRSQEDLTKASAIVQWIIRQQNSYGGFASMQDTVVALQALAAYGAATYNSVTQNVIKINSKNTFEKVFTVNNENRLLLQQTPLPQVPGKYSLTVNGTGCVLIQTALRYNIHLPEGAFGFSLSVQTSNASCPRDQPGKFDIVLISSYTGKRSSSNMVIIDVKMLSGFVPVKSSLDQLIDDHTVMQVEYKKNHVLLYLGNILQKRRKEVTFSVEQDFVVTHPKPAPVQIYDYYETEEYAVAEYMSLCRGVVEEMG.

The signal sequence occupies residues 1 to 36; it reads MHCFLGREILSFFCLTVRKMWLKFILAILLLHAAAG. N-linked (GlcNAc...) asparagine glycosylation is found at asparagine 67, asparagine 82, asparagine 89, asparagine 191, asparagine 342, asparagine 403, asparagine 527, asparagine 588, asparagine 757, asparagine 1141, asparagine 1221, asparagine 1315, and asparagine 1347.

It belongs to the protease inhibitor I39 (alpha-2-macroglobulin) family. Homotetramer, which consists of two pairs of disulfide-linked chains. In terms of processing, lacks the thioester bond found in other members of this family. Post-translationally, glycosylated; contains 56 glucosamine units per subunit.

It localises to the secreted. In terms of biological role, is able to inhibit all four classes of proteinases by a unique 'trapping' mechanism. This protein has a peptide stretch, called the 'bait region' which contains specific cleavage sites for different proteinases. When a proteinase cleaves the bait region, a conformational change is induced in the protein which traps the proteinase. The entrapped enzyme remains active against low molecular weight substrates (activity against high molecular weight substrates is greatly reduced). The chain is Ovostatin from Gallus gallus (Chicken).